The chain runs to 322 residues: Ferrochelatase (322 aa).

Fe cation contacts are provided by H195 and E276.

This sequence belongs to the ferrochelatase family.

The protein resides in the cytoplasm. The catalysed reaction is heme b + 2 H(+) = protoporphyrin IX + Fe(2+). It participates in porphyrin-containing compound metabolism; protoheme biosynthesis; protoheme from protoporphyrin-IX: step 1/1. Catalyzes the ferrous insertion into protoporphyrin IX. The polypeptide is Ferrochelatase (Edwardsiella ictaluri (strain 93-146)).